A 463-amino-acid chain; its full sequence is Sialic acid-binding Ig-like lectin 9 (463 aa).

A signal peptide spans M1–G17. Over Q18–G348 the chain is Extracellular. Residues S20–T140 enclose the Ig-like V-type domain. 3 disulfides stabilise this stretch: C36-C170, C41-C102, and C164-C213. The N-linked (GlcNAc...) asparagine glycan is linked to N101. Residue R120 participates in N-acetylneuraminate binding. N-linked (GlcNAc...) asparagine glycans are attached at residues N138 and N161. The 84-residue stretch at P146–H229 folds into the Ig-like C2-type 1 domain. Residues N225, N231, N238, and N256 are each glycosylated (N-linked (GlcNAc...) asparagine). Residues P236 to S336 form the Ig-like C2-type 2 domain. A disulfide bridge connects residues C272 and C320. N-linked (GlcNAc...) asparagine glycosylation is present at N334. The chain crosses the membrane as a helical span at residues V349–V369. Over V370–R463 the chain is Cytoplasmic. A disordered region spans residues P380–E428. Positions L431 to L436 match the ITIM motif motif. Residues W444–R463 form a disordered region. The short motif at T454 to I459 is the SLAM-like motif element.

Belongs to the immunoglobulin superfamily. SIGLEC (sialic acid binding Ig-like lectin) family. As to expression, expressed by peripheral blood leukocytes (neutrophils and monocytes but not eosinophils). Found in liver, fetal liver, bone marrow, placenta, spleen and in lower levels in skeletal muscle, fetal brain, stomach, lung, thymus, prostate, brain, mammary, adrenal gland, colon, trachea, cerebellum, testis, small intestine and spinal cordon.

The protein resides in the membrane. Putative adhesion molecule that mediates sialic-acid dependent binding to cells. Preferentially binds to alpha-2,3- or alpha-2,6-linked sialic acid. The sialic acid recognition site may be masked by cis interactions with sialic acids on the same cell surface. This chain is Sialic acid-binding Ig-like lectin 9 (SIGLEC9), found in Homo sapiens (Human).